We begin with the raw amino-acid sequence, 298 residues long: MTIDLSSMITETRNPASVEIDQLPTLEMLRVINQEDQQVALAVSQLLPEITRAVDAIAAAFGKGGRLVYIGAGTSGRLGILDASECPPTYGVSAEQVVGLIAGGHKAILQAVENAEDDAELGAQDLKNIQFCANDVLVGIAASGRTPYVLGAMAHARAVGATVCSISCNPGSPLAQAADISMVAVVGPEIVTGSSRMKAGTAQKLILNMLSTGAMIRTGKVYGNLMVDVEATNAKLVERQKRIVMEATDCERAVAERALAQADNHCKTAIVMILAGLTADEARTRLQSSNGFISQCTH.

Residues Ile-57–Lys-220 form the SIS domain. The Proton donor role is filled by Glu-85. Glu-116 is an active-site residue.

This sequence belongs to the GCKR-like family. MurNAc-6-P etherase subfamily. In terms of assembly, homodimer.

The catalysed reaction is N-acetyl-D-muramate 6-phosphate + H2O = N-acetyl-D-glucosamine 6-phosphate + (R)-lactate. The protein operates within amino-sugar metabolism; 1,6-anhydro-N-acetylmuramate degradation. It participates in amino-sugar metabolism; N-acetylmuramate degradation. It functions in the pathway cell wall biogenesis; peptidoglycan recycling. Its function is as follows. Specifically catalyzes the cleavage of the D-lactyl ether substituent of MurNAc 6-phosphate, producing GlcNAc 6-phosphate and D-lactate. Together with AnmK, is also required for the utilization of anhydro-N-acetylmuramic acid (anhMurNAc) either imported from the medium or derived from its own cell wall murein, and thus plays a role in cell wall recycling. In Aeromonas hydrophila subsp. hydrophila (strain ATCC 7966 / DSM 30187 / BCRC 13018 / CCUG 14551 / JCM 1027 / KCTC 2358 / NCIMB 9240 / NCTC 8049), this protein is N-acetylmuramic acid 6-phosphate etherase.